A 123-amino-acid chain; its full sequence is Small ribosomal subunit protein uS13 (123 aa).

Residues 97–123 (PCRGQRTHTNSRTRKGPRRGVMAKKKK) are disordered.

Belongs to the universal ribosomal protein uS13 family. In terms of assembly, part of the 30S ribosomal subunit. Forms a loose heterodimer with protein S19. Forms two bridges to the 50S subunit in the 70S ribosome.

Its function is as follows. Located at the top of the head of the 30S subunit, it contacts several helices of the 16S rRNA. In the 70S ribosome it contacts the 23S rRNA (bridge B1a) and protein L5 of the 50S subunit (bridge B1b), connecting the 2 subunits; these bridges are implicated in subunit movement. Contacts the tRNAs in the A and P-sites. This Solidesulfovibrio magneticus (strain ATCC 700980 / DSM 13731 / RS-1) (Desulfovibrio magneticus) protein is Small ribosomal subunit protein uS13.